Here is a 173-residue protein sequence, read N- to C-terminus: Acireductone dioxygenase (173 aa).

Positions 1 to 20 (MKVYEYDNSTEDQREDHDSG) are disordered. 4 residues coordinate Fe(2+): His81, His83, Glu87, and His126. The Ni(2+) site is built by His81, His83, Glu87, and His126.

Belongs to the acireductone dioxygenase (ARD) family. The cofactor is Fe(2+). Requires Ni(2+) as cofactor.

It localises to the cytoplasm. The protein localises to the nucleus. The catalysed reaction is 1,2-dihydroxy-5-(methylsulfanyl)pent-1-en-3-one + O2 = 4-methylsulfanyl-2-oxobutanoate + formate + 2 H(+). The enzyme catalyses 1,2-dihydroxy-5-(methylsulfanyl)pent-1-en-3-one + O2 = 3-(methylsulfanyl)propanoate + CO + formate + 2 H(+). Its pathway is amino-acid biosynthesis; L-methionine biosynthesis via salvage pathway; L-methionine from S-methyl-5-thio-alpha-D-ribose 1-phosphate: step 5/6. Functionally, catalyzes 2 different reactions between oxygen and the acireductone 1,2-dihydroxy-3-keto-5-methylthiopentene (DHK-MTPene) depending upon the metal bound in the active site. Fe-containing acireductone dioxygenase (Fe-ARD) produces formate and 2-keto-4-methylthiobutyrate (KMTB), the alpha-ketoacid precursor of methionine in the methionine recycle pathway. Ni-containing acireductone dioxygenase (Ni-ARD) produces methylthiopropionate, carbon monoxide and formate, and does not lie on the methionine recycle pathway. This chain is Acireductone dioxygenase, found in Tuber melanosporum (strain Mel28) (Perigord black truffle).